The following is a 255-amino-acid chain: Small ribosomal subunit protein uS2 (255 aa).

The disordered stretch occupies residues alanine 232–alanine 255.

Belongs to the universal ribosomal protein uS2 family.

This chain is Small ribosomal subunit protein uS2, found in Agrobacterium fabrum (strain C58 / ATCC 33970) (Agrobacterium tumefaciens (strain C58)).